Consider the following 834-residue polypeptide: Enhancer of filamentation 1 (834 aa).

Residues 1–505 are required for interaction with ITCH; sequence MKYKNLMARA…HQILSQTSHD (505 aa). An SH3 domain is found at 3–65; that stretch reads YKNLMARALY…PGNRVKLLIG (63 aa). Tyrosine 92, tyrosine 164, tyrosine 166, tyrosine 177, tyrosine 189, tyrosine 214, and tyrosine 223 each carry phosphotyrosine; by ABL1. The interval 102 to 229 is interacts strongly with spindle-regulatory protein D1M1; sequence RDTIYQVPPS…KGVYAIPPSA (128 aa). The disordered stretch occupies residues 238-260; it reads EKDYDFPPPMRQAGRPDLRPEGV. Residue tyrosine 279 is modified to Phosphotyrosine; by ABL1. The tract at residues 291–316 is disordered; sequence ARRHQSLSPNHPPPQLGQSVGSQNDA. Serine 296 carries the post-translational modification Phosphoserine. A compositionally biased stretch (polar residues) spans 306 to 315; that stretch reads LGQSVGSQND. Tyrosine 317 is modified (phosphotyrosine; by ABL1). Disordered regions lie at residues 328–398 and 560–623; these read PPAE…SPAQ and GPGS…GSER. Basic and acidic residues predominate over residues 332-344; the sequence is TSEKANPQERDGV. The interval 351-834 is interacts with CTTN; it reads NPPDAKGSRD…KRSLLEMATF (484 aa). Positions 360 to 363 match the Caspase cleavage related site motif; that stretch reads DLVD. Serine 369 carries the post-translational modification Phosphoserine. The segment covering 369–395 has biased composition (low complexity); that stretch reads SFSSTGSTRSNMSTSSTSSKESSLSAS. The divergent helix-loop-helix motif stretch occupies residues 710 to 760; it reads FYYDQCETHFISLLNAIDALFSCVSSAQPPRIFVAHSKFVILSAHKLVFIG. The required for interaction with PLK1 stretch occupies residues 710–834; that stretch reads FYYDQCETHF…KRSLLEMATF (125 aa). Phosphoserine; by CSNK1D and CSNK1E is present on serine 780. Phosphothreonine; by CSNK1E is present on threonine 804.

This sequence belongs to the CAS family. Homodimer. Forms heterodimers with BCAR1/p130cas. Forms complexes with PTK2B/RAFTK, adapter protein CRKL and LYN kinase. Part of a complex composed of NEDD9, AURKA and CTTN; within the complex NEDD9 acts as a scaffold protein and is required for complex formation. Part of a ternary complex composed of SMAD3, ITCH/AIP4 and NEDD9/HEF1; within the complex NEDD9/HEF1 interacts (via N-terminus) with ITCH/AIP4 (via WW domains); the complex mediates ubiquitination and proteasomal degradation of NEDD9/HEF1. Interacts with SMAD3; the interaction promotes NEDD9 ubiquitination and proteasomal degradation. Interacts with ID2. Interacts with CTTN (via N-terminus). Interacts with MICAL. Interacts with TXNL4/DIM1. Interacts with BCAR3 (via Ras-GEF domain). Interacts with SH2D3C isoform 1 and isoform 2. Interacts with ECT2. Interacts with PTPN11/SHP-2 (via SH2 domains); the interaction is enhanced when NEDD9/CAS-L is tyrosine phosphorylated. Interacts (via C-terminus) with PLK1 (via polo box domains). Interacts with NKX2-5. Interacts with SMAD3; the interaction is inhibited by oxidation of NEDD9. Interacts with NEDD9/HEF1; interaction is induced by CXCL12 promotion of ABL-mediated phosphorylation of NEDD9/HEF1. Interacts (via SH3 domain) with PTK2/FAK. Interacts with FYN; in the presence of PTK2. Interacts with INPPL1/SHIP2. Cell cycle-regulated processing produces four isoforms: p115, p105, p65, and p55. Isoform p115 arises from p105 phosphorylation and appears later in the cell cycle. Isoform p55 arises from p105 as a result of cleavage at a caspase cleavage-related site and it appears specifically at mitosis. The p65 isoform is poorly detected. In terms of processing, polyubiquitinated by ITCH/AIP4, leading to proteasomal degradation. Post-translationally, PTK2/FAK1 phosphorylates the protein at the YDYVHL motif (conserved among all cas proteins) following integrin stimulation. The SRC family kinases (FYN, SRC, LCK and CRK) are recruited to the phosphorylated sites and can phosphorylate other tyrosine residues. Ligation of either integrin beta-1 or B-cell antigen receptor on tonsillar B-cells and B-cell lines promotes tyrosine phosphorylation and both integrin and BCR-mediated tyrosine phosphorylation requires an intact actin network. Phosphorylation is required to recruit NEDD9 to T-cell receptor microclusters at the periphery of newly formed immunological synapses. In fibroblasts transformation with oncogene v-ABL results in an increase in tyrosine phosphorylation. Transiently phosphorylated following CD3 cross-linking and this phosphorylated form binds to CRKL and C3G. A mutant lacking the SH3 domain is phosphorylated upon CD3 cross-linking but not upon integrin beta-1 cross-linking. Tyrosine phosphorylation occurs upon stimulation of the G-protein coupled C1a calcitonin receptor. Calcitonin-stimulated tyrosine phosphorylation is mediated by calcium- and protein kinase C-dependent mechanisms and requires the integrity of the actin cytoskeleton. Phosphorylation at Ser-369 induces proteasomal degradation. Phosphorylated by LYN. Phosphorylation at Ser-780 by CSNK1D or CSNK1E, or phosphorylation of Thr-804 by CSNK1E enhances the interaction of NEDD9 with PLK1. In terms of tissue distribution, expressed in B-cells (at protein level). Expressed in the respiratory epithelium of the main bronchi to the bronchioles in the lungs (at protein level). High levels detected in kidney, lung, and placenta. Expressed in lymphocytes.

It localises to the cytoplasm. Its subcellular location is the cell cortex. The protein resides in the nucleus. The protein localises to the golgi apparatus. It is found in the cell projection. It localises to the lamellipodium. Its subcellular location is the cell junction. The protein resides in the focal adhesion. The protein localises to the cytoskeleton. It is found in the spindle pole. It localises to the cilium. Its subcellular location is the cilium basal body. The protein resides in the basolateral cell membrane. The protein localises to the spindle. Its function is as follows. Scaffolding protein which plays a central coordinating role for tyrosine-kinase-based signaling related to cell adhesion. As a focal adhesion protein, plays a role in embryonic fibroblast migration. May play an important role in integrin beta-1 or B cell antigen receptor (BCR) mediated signaling in B- and T-cells. Integrin beta-1 stimulation leads to recruitment of various proteins including CRKL and SHPTP2 to the tyrosine phosphorylated form. Promotes adhesion and migration of lymphocytes; as a result required for the correct migration of lymphocytes to the spleen and other secondary lymphoid organs. Plays a role in the organization of T-cell F-actin cortical cytoskeleton and the centralization of T-cell receptor microclusters at the immunological synapse. Negatively regulates cilia outgrowth in polarized cysts. Modulates cilia disassembly via activation of AURKA-mediated phosphorylation of HDAC6 and subsequent deacetylation of alpha-tubulin. Positively regulates RANKL-induced osteoclastogenesis. Required for the maintenance of hippocampal dendritic spines in the dentate gyrus and CA1 regions, thereby involved in spatial learning and memory. This is Enhancer of filamentation 1 from Homo sapiens (Human).